A 265-amino-acid chain; its full sequence is uncharacterized protein (265 aa).

This is an uncharacterized protein from Autographa californica nuclear polyhedrosis virus (AcMNPV).